A 268-amino-acid chain; its full sequence is Phosphoethanolamine/phosphocholine phosphatase (268 aa).

The active-site Nucleophile is the aspartate 32. Residues aspartate 32 and aspartate 34 each contribute to the Mg(2+) site. Catalysis depends on aspartate 34, which acts as the Proton donor. Substrate-binding residues include aspartate 43 and aspartate 123. Residue aspartate 203 participates in Mg(2+) binding.

It belongs to the HAD-like hydrolase superfamily. PHOSPHO family. Requires Mg(2+) as cofactor. As to expression, expressed at sites of mineralization in bone and cartilage. Highly expressed in hypertrophic chondrocytes compared to non-chondrogenic tissues. Expressed in chondrocytes but not in heart, liver, lung, kidney, spleen, muscle, adipose tissues not duodenum. In diaphyseal cortical bone, it is expressed in the osteoid layer of the periosteum, forming surfaces of growing osteons, and newly formed osteocytes, whereas it is not expressed in the endosteum and closed osteons. In growth plate cartilage, it is limited to the early hypertrophic chondrocytes and the ossification groove of Ranvier. Highly expressed on the mineralization surfaces of the cartilage remnants and trabecular bone within the primary spongiosa. Expressed in 17-day-old embryonic calvaria, the osteoid present on the intramembranous and periosteal bone surfaces but not in soft tissues examined.

Its subcellular location is the extracellular vesicle. It carries out the reaction phosphoethanolamine + H2O = ethanolamine + phosphate. It catalyses the reaction phosphocholine + H2O = choline + phosphate. In terms of biological role, phosphatase that has a high activity toward phosphoethanolamine (PEA) and phosphocholine (PCho). Involved in the generation of inorganic phosphate for bone mineralization. This is Phosphoethanolamine/phosphocholine phosphatase (PHOSPHO1) from Gallus gallus (Chicken).